A 194-amino-acid chain; its full sequence is Peptidyl-tRNA hydrolase (194 aa).

A tRNA-binding site is contributed by Tyr17. The active-site Proton acceptor is the His22. TRNA-binding residues include Tyr68, Asn70, and Asn115.

It belongs to the PTH family. In terms of assembly, monomer.

It localises to the cytoplasm. The enzyme catalyses an N-acyl-L-alpha-aminoacyl-tRNA + H2O = an N-acyl-L-amino acid + a tRNA + H(+). Hydrolyzes ribosome-free peptidyl-tRNAs (with 1 or more amino acids incorporated), which drop off the ribosome during protein synthesis, or as a result of ribosome stalling. Its function is as follows. Catalyzes the release of premature peptidyl moieties from peptidyl-tRNA molecules trapped in stalled 50S ribosomal subunits, and thus maintains levels of free tRNAs and 50S ribosomes. The protein is Peptidyl-tRNA hydrolase of Pseudoalteromonas atlantica (strain T6c / ATCC BAA-1087).